The chain runs to 293 residues: Elongation factor Ts (293 aa).

Residues 80 to 83 (TDFV) form an involved in Mg(2+) ion dislocation from EF-Tu region.

This sequence belongs to the EF-Ts family.

The protein localises to the cytoplasm. Associates with the EF-Tu.GDP complex and induces the exchange of GDP to GTP. It remains bound to the aminoacyl-tRNA.EF-Tu.GTP complex up to the GTP hydrolysis stage on the ribosome. This chain is Elongation factor Ts, found in Burkholderia cenocepacia (strain ATCC BAA-245 / DSM 16553 / LMG 16656 / NCTC 13227 / J2315 / CF5610) (Burkholderia cepacia (strain J2315)).